A 21-amino-acid polypeptide reads, in one-letter code: APKDDTWYTGAKLGWSQYHDT.

A beta stranded transmembrane segment spans residues 6–16; sequence TWYTGAKLGWS.

Belongs to the outer membrane OOP (TC 1.B.6) superfamily. OmpA family. As to quaternary structure, monomer and homodimer.

Its subcellular location is the cell outer membrane. Its function is as follows. With TolR probably plays a role in maintaining the position of the peptidoglycan cell wall in the periplasm. Acts as a porin with low permeability that allows slow penetration of small solutes; an internal gate slows down solute passage. The sequence is that of Outer membrane protein A from Actinobacillus lignieresii.